The sequence spans 177 residues: Endoribonuclease YbeY (177 aa).

Zn(2+) is bound by residues His-118, His-122, and His-128.

This sequence belongs to the endoribonuclease YbeY family. Requires Zn(2+) as cofactor.

The protein resides in the cytoplasm. Single strand-specific metallo-endoribonuclease involved in late-stage 70S ribosome quality control and in maturation of the 3' terminus of the 16S rRNA. The sequence is that of Endoribonuclease YbeY from Mycobacterium bovis (strain ATCC BAA-935 / AF2122/97).